Consider the following 744-residue polypeptide: Zinc finger protein 366 (744 aa).

Residues 206–228 are disordered; the sequence is KQPPEPLLPRKAEPQESEETKQK. Residues 213-228 are compositionally biased toward basic and acidic residues; the sequence is LPRKAEPQESEETKQK. 11 C2H2-type zinc fingers span residues 253-275, 281-303, 309-331, 337-359, 365-387, 393-415, 421-443, 449-471, 477-499, 505-527, and 533-556; these read WQCP…ILGH, HACT…MLTH, HKCQ…MMQH, HNCR…EAKH, NICV…LTTH, YNCS…MMKH, YICS…SLTH, HKCG…VLIH, YQCH…MIVH, FKCK…MHLH, and FKCL…KVKH. Residues 455–744 are interaction with NRIP1; it reads GREFTLLANM…MEKQAVLLGI (290 aa). A PXDLS motif is present at residues 590–594; that stretch reads PFDLS. 2 disordered regions span residues 603–627 and 664–692; these read VFQS…NCYE and KEEK…QERD.

Interacts with ESR1 and NRIP1. Interacts (via PXDLS motif) with CTBP1. Expressed in immature and mature dendritic cells (DCs). Not detected in other blood cell types.

The protein localises to the nucleus. Its function is as follows. Has transcriptional repression activity. Acts as a corepressor of ESR1; the function seems to involve CTBP1 and histone deacetylases. This chain is Zinc finger protein 366, found in Homo sapiens (Human).